The following is a 352-amino-acid chain: Zona pellucida-binding protein 2 (352 aa).

The first 28 residues, 1–28 (MAGGGGRPCSPQRALLGMVAIMAVVAEA), serve as a signal peptide directing secretion. N-linked (GlcNAc...) asparagine glycans are attached at residues Asn-110 and Asn-309.

This sequence belongs to the zona pellucida-binding protein Sp38 family.

The protein resides in the secreted. It is found in the cytoplasmic vesicle. It localises to the secretory vesicle. The protein localises to the acrosome. Its function is as follows. May be implicated in the gamete interaction during fertilization. The sequence is that of Zona pellucida-binding protein 2 (ZPBP2) from Gallus gallus (Chicken).